Reading from the N-terminus, the 403-residue chain is MADPKYADLPGIARNEPDVYETSDLPEDDQAEFDAEELTSTSVEHIIVNPNAAYDKFKDKRVGTKGLDFSDRIGKTKRTGYESGEYEMLGEGLGVKETPQQKYQRLLHEVQELTTEVEKIKTTVKESATEEKLTPVVLAKQLAALKQQLVASHLEKLLGPDAAINLTDPDGALAKRLLLQLEATKNSKGTGSGGKTTSGTPPDSSLVTYELHSRPEQDKFSQAAKVAELEKRLTELEATVRCDQDAQNPLSAGLQGACLMDTVELLQAKVGALDLAVLDQVEARLQSVLGKVNEIAKHKASVEDADTQSKVHQLYETIQRWSPIAASLPELVQRLVTIKQLHEQAMQFGQLLTHLDTTQQMIACSLKDNATLLTQVQTTMCENLSTIEGNFANIDERMKKLGK.

Residues Met-1 to Pro-26 form a disordered region. Ala-2 bears the N-acetylalanine mark. Tyr-6 is subject to Phosphotyrosine. Residue Ser-83 is modified to Phosphoserine. At Tyr-86 the chain carries Phosphotyrosine. Residues Gln-100–Glu-130 are a coiled coil. Residues Thr-134 and Thr-200 each carry the phosphothreonine modification. Residues Thr-184–Ser-204 form a disordered region. Positions Glu-216–Asn-248 form a coiled coil. The residue at position 322 (Ser-322) is a Phosphoserine.

Belongs to the dynactin subunit 2 family. As to quaternary structure, subunit of dynactin, a multiprotein complex part of a tripartite complex with dynein and a adapter, such as BICDL1, BICD2 or HOOK3. The dynactin complex is built around ACTR1A/ACTB filament and consists of an actin-related filament composed of a shoulder domain, a pointed end and a barbed end. Its length is defined by its flexible shoulder domain. The soulder is composed of 2 DCTN1 subunits, 4 DCTN2 and 2 DCTN3. The 4 DCNT2 (via N-terminus) bind the ACTR1A filament and act as molecular rulers to determine the length. The pointed end is important for binding dynein-dynactin cargo adapters and consists of 4 subunits: ACTR10, DCNT4, DCTN5 and DCTN6. The barbed end is composed of a CAPZA1:CAPZB heterodimers, which binds ACTR1A/ACTB filament and dynactin and stabilizes dynactin. Interacts with BICD2 and CEP135. Interacts with DYNAP. Interacts with ECPAS. Interacts with MAPRE1.

Its subcellular location is the cytoplasm. The protein localises to the cytoskeleton. The protein resides in the microtubule organizing center. It localises to the centrosome. It is found in the membrane. Part of the dynactin complex that activates the molecular motor dynein for ultra-processive transport along microtubules. In the dynactin soulder domain, binds the ACTR1A filament and acts as a molecular ruler to determine the length. Modulates cytoplasmic dynein binding to an organelle, and plays a role in prometaphase chromosome alignment and spindle organization during mitosis. Involved in anchoring microtubules to centrosomes. May play a role in synapse formation during brain development. In Bos taurus (Bovine), this protein is Dynactin subunit 2 (DCTN2).